The following is a 351-amino-acid chain: UDP-N-acetylglucosamine--N-acetylmuramyl-(pentapeptide) pyrophosphoryl-undecaprenol N-acetylglucosamine transferase (351 aa).

UDP-N-acetyl-alpha-D-glucosamine is bound by residues 13 to 15 (TGG), asparagine 125, arginine 161, serine 189, isoleucine 241, 260 to 265 (ALTVCE), and glutamine 285.

It belongs to the glycosyltransferase 28 family. MurG subfamily.

Its subcellular location is the cell inner membrane. The catalysed reaction is di-trans,octa-cis-undecaprenyl diphospho-N-acetyl-alpha-D-muramoyl-L-alanyl-D-glutamyl-meso-2,6-diaminopimeloyl-D-alanyl-D-alanine + UDP-N-acetyl-alpha-D-glucosamine = di-trans,octa-cis-undecaprenyl diphospho-[N-acetyl-alpha-D-glucosaminyl-(1-&gt;4)]-N-acetyl-alpha-D-muramoyl-L-alanyl-D-glutamyl-meso-2,6-diaminopimeloyl-D-alanyl-D-alanine + UDP + H(+). The protein operates within cell wall biogenesis; peptidoglycan biosynthesis. Cell wall formation. Catalyzes the transfer of a GlcNAc subunit on undecaprenyl-pyrophosphoryl-MurNAc-pentapeptide (lipid intermediate I) to form undecaprenyl-pyrophosphoryl-MurNAc-(pentapeptide)GlcNAc (lipid intermediate II). This is UDP-N-acetylglucosamine--N-acetylmuramyl-(pentapeptide) pyrophosphoryl-undecaprenol N-acetylglucosamine transferase from Haemophilus influenzae (strain PittGG).